The chain runs to 236 residues: MNFLYDISAVEIGQHFYWSLGGFQMHGQVLINSWIVLGLIIAFAVTTTRDLKPVPEGGQNLAEFVVEYIRDIAKTQVGHDYLEWTPFIGTLFLFIFVSNWSGALIPWKLIELPHGELGAPTNDINTTVALALLTSLTYFYAGLKKKGLEYFGKYVQPTPILLPINVLEDFTKPLSLSFRLFGNILADELVVAVLVSLVPLVIPIPLIFLGLFTSGIQALIFATLAGAYIGEALEGH.

5 helical membrane passes run 25-45, 87-107, 123-143, 180-202, and 210-230; these read MHGQ…AFAV, FIGT…LIPW, DINT…YAGL, LFGN…PLVI, and GLFT…AYIG.

It belongs to the ATPase A chain family. As to quaternary structure, F-type ATPases have 2 components, CF(1) - the catalytic core - and CF(0) - the membrane proton channel. CF(1) has five subunits: alpha(3), beta(3), gamma(1), delta(1), epsilon(1). CF(0) has four main subunits: a, b, b' and c.

Its subcellular location is the plastid. It is found in the chloroplast thylakoid membrane. Functionally, key component of the proton channel; it plays a direct role in the translocation of protons across the membrane. The protein is ATP synthase subunit a, chloroplastic of Ostreococcus tauri.